A 138-amino-acid chain; its full sequence is Putative pre-16S rRNA nuclease (138 aa).

It belongs to the YqgF nuclease family.

The protein resides in the cytoplasm. Its function is as follows. Could be a nuclease involved in processing of the 5'-end of pre-16S rRNA. In Bacteroides fragilis (strain ATCC 25285 / DSM 2151 / CCUG 4856 / JCM 11019 / LMG 10263 / NCTC 9343 / Onslow / VPI 2553 / EN-2), this protein is Putative pre-16S rRNA nuclease.